Consider the following 601-residue polypeptide: MCGIVGYIGTNNAKGILLEGLEKLEYRGYDSAGIALQNKELVTVVKEKGRIADLASLVPSDAFGTTGIGHTRWATHGKPNHENAHPHQSKSGRFTIVHNGVIENYTLLKEEYLKNHSFVSDTDTEVIVQLIELFAAELSTKEAFKKALSLLHGSYAICLIDQTNTETLYAAKNKSPLLIGKGENFNVIASDAMAVLKETDEFVEIMDKEIVIVTKDGFTLETLEGEEITRASYKAELDASDIEKGTYPHYMLKEIDEQPAVTRKIIQAYQDEAGEINVDKTIIDEILSSDRIHIVACGTSYHAGLVGKNLIEKMAKIPVEVHVSSEFAYNLPLMSKKPLFIFITQSGETADSRQCLVKVKELGYRTLTLTNVPGSTLDREADHSMYLYAGPEIAVASTKAYTAQISVLAVLAVSLGREIGDEEALNINLAAELGIVATAMEAMVSSKEVIEHIAGEYLATSRNAFFLGRNIDYFVAMEAALKLKEISYIQAEGFASGELKHGTIALIEDGTPVLALITQESINWNIRGNVNEVLARGAKTCIFAMENVAQPGDRFVIPQVHPLLTPLASVIPCQLLAYYAALHRDCDVDKPRNLAKSVTVE.

The Nucleophile; for GATase activity role is filled by Cys-2. The Glutamine amidotransferase type-2 domain maps to 2-216 (CGIVGYIGTN…DKEIVIVTKD (215 aa)). SIS domains are found at residues 282–421 (IIDE…EIGD) and 453–591 (IAGE…VDKP). Catalysis depends on Lys-596, which acts as the For Fru-6P isomerization activity.

In terms of assembly, homodimer.

Its subcellular location is the cytoplasm. The enzyme catalyses D-fructose 6-phosphate + L-glutamine = D-glucosamine 6-phosphate + L-glutamate. In terms of biological role, catalyzes the first step in hexosamine metabolism, converting fructose-6P into glucosamine-6P using glutamine as a nitrogen source. This chain is Glutamine--fructose-6-phosphate aminotransferase [isomerizing], found in Listeria monocytogenes serovar 1/2a (strain ATCC BAA-679 / EGD-e).